Here is a 197-residue protein sequence, read N- to C-terminus: Probable molybdenum cofactor guanylyltransferase (197 aa).

GTP-binding positions include 12-14 (LAG), Lys24, Asp71, and Asp103. Residue Asp103 participates in Mg(2+) binding.

It belongs to the MobA family. It depends on Mg(2+) as a cofactor.

It is found in the cytoplasm. The enzyme catalyses Mo-molybdopterin + GTP + H(+) = Mo-molybdopterin guanine dinucleotide + diphosphate. In terms of biological role, transfers a GMP moiety from GTP to Mo-molybdopterin (Mo-MPT) cofactor (Moco or molybdenum cofactor) to form Mo-molybdopterin guanine dinucleotide (Mo-MGD) cofactor. This chain is Probable molybdenum cofactor guanylyltransferase, found in Mycobacterium avium (strain 104).